The following is a 159-amino-acid chain: Transcription antitermination protein NusB (159 aa).

This sequence belongs to the NusB family.

In terms of biological role, involved in transcription antitermination. Required for transcription of ribosomal RNA (rRNA) genes. Binds specifically to the boxA antiterminator sequence of the ribosomal RNA (rrn) operons. The sequence is that of Transcription antitermination protein NusB from Stenotrophomonas maltophilia (strain K279a).